Consider the following 1142-residue polypeptide: Serine/threonine-protein kinase dst2 (1142 aa).

The Protein kinase domain occupies 20-276 (FELIEEIAEG…ATELLKHPFV (257 aa)). ATP contacts are provided by residues 26–34 (IAEGSFGTV) and Lys-49. The active-site Proton acceptor is Asp-141. A compositionally biased stretch (acidic residues) spans 300–322 (LEEGGDEDEDSSEQEGMDSDDKD). 5 disordered regions span residues 300 to 492 (LEEG…KTLE), 515 to 636 (KKQQ…KSTP), 744 to 768 (ETNH…TEQR), 939 to 974 (SIEE…GSVT), and 1040 to 1142 (EEQK…DNQD). A compositionally biased stretch (basic and acidic residues) spans 323–336 (SDLKKSVGTSDRKS). The segment covering 355–365 (QRKSTGQNLQL) has biased composition (polar residues). Low complexity predominate over residues 371–390 (QQSSSSSSSSSSSLSSQSLQ). The span at 391-413 (PQAVNKSTDRLSANINGSNTKSN) shows a compositional bias: polar residues. Residues 421 to 452 (AAASASASSLNLSTGNLQQSLSGSGSITTNSG) are compositionally biased toward low complexity. Basic and acidic residues predominate over residues 467–477 (SSDDRSPDIRT). Low complexity predominate over residues 541 to 554 (KQNAAKATQQQKQS). Composition is skewed to basic and acidic residues over residues 555-588 (AAKE…KKNQ), 597-635 (KVTD…DKST), 744-760 (ETNH…EQHI), and 939-969 (SIEE…EQKK). A coiled-coil region spans residues 716-1050 (QEYHTVLREN…EQKKSKLKLK (335 aa)). The segment covering 1068-1091 (TGTTPPSTSSNQKTLNNSNGASSN) has biased composition (low complexity).

The protein belongs to the protein kinase superfamily. STE Ser/Thr protein kinase family. STE20 subfamily. It depends on Mg(2+) as a cofactor.

The catalysed reaction is L-seryl-[protein] + ATP = O-phospho-L-seryl-[protein] + ADP + H(+). It catalyses the reaction L-threonyl-[protein] + ATP = O-phospho-L-threonyl-[protein] + ADP + H(+). This is Serine/threonine-protein kinase dst2 from Dictyostelium discoideum (Social amoeba).